Consider the following 1034-residue polypeptide: Ice nucleation protein InaU (1034 aa).

The interval 162–993 (ATYGSTLSGT…LTAGENSVLI (832 aa)) is octapeptide periodicity. Disordered stretches follow at residues 260–287 (YGST…KGSD), 311–342 (TQTA…GYGS), 356–383 (YGST…KGSD), 407–438 (TQTA…GYGS), 452–480 (YGST…GSDL), and 570–597 (AREG…TGYG). 6 stretches are compositionally biased toward polar residues: residues 261–286 (GSTQ…QKGS), 311–334 (TQTA…QKGS), 357–382 (GSTQ…QKGS), 407–430 (TQTA…QKGS), 453–480 (GSTQ…GSDL), and 580–592 (YGST…NSDL).

The protein belongs to the bacterial ice nucleation protein family.

Its subcellular location is the cell outer membrane. In terms of biological role, ice nucleation proteins enable bacteria to nucleate crystallization in supercooled water. The polypeptide is Ice nucleation protein InaU (inaU) (Pantoea ananas (Erwinia uredovora)).